A 570-amino-acid polypeptide reads, in one-letter code: Proline--tRNA ligase (570 aa).

The protein belongs to the class-II aminoacyl-tRNA synthetase family. ProS type 1 subfamily. As to quaternary structure, homodimer.

The protein resides in the cytoplasm. The catalysed reaction is tRNA(Pro) + L-proline + ATP = L-prolyl-tRNA(Pro) + AMP + diphosphate. Catalyzes the attachment of proline to tRNA(Pro) in a two-step reaction: proline is first activated by ATP to form Pro-AMP and then transferred to the acceptor end of tRNA(Pro). As ProRS can inadvertently accommodate and process non-cognate amino acids such as alanine and cysteine, to avoid such errors it has two additional distinct editing activities against alanine. One activity is designated as 'pretransfer' editing and involves the tRNA(Pro)-independent hydrolysis of activated Ala-AMP. The other activity is designated 'posttransfer' editing and involves deacylation of mischarged Ala-tRNA(Pro). The misacylated Cys-tRNA(Pro) is not edited by ProRS. The protein is Proline--tRNA ligase of Neisseria meningitidis serogroup B (strain ATCC BAA-335 / MC58).